A 203-amino-acid chain; its full sequence is uncharacterized protein (203 aa).

Helical transmembrane passes span 60 to 80 (IIDMILGAVTISLVIIVFFLY), 114 to 134 (WFQLKYLLLVSMTAFSFYFCT), and 157 to 177 (LQLGWICTTALLFYFYDALIL). Residue 192–199 (GAMSEGKT) participates in ATP binding.

Its subcellular location is the membrane. This is an uncharacterized protein from Saccharomyces cerevisiae (strain ATCC 204508 / S288c) (Baker's yeast).